The chain runs to 90 residues: Small ribosomal subunit protein uS19 (90 aa).

Belongs to the universal ribosomal protein uS19 family.

Its function is as follows. Protein S19 forms a complex with S13 that binds strongly to the 16S ribosomal RNA. This Rhizorhabdus wittichii (strain DSM 6014 / CCUG 31198 / JCM 15750 / NBRC 105917 / EY 4224 / RW1) (Sphingomonas wittichii) protein is Small ribosomal subunit protein uS19.